The chain runs to 236 residues: UPF0257 lipoprotein YnfC (236 aa).

An N-terminal signal peptide occupies residues Met-1–Gly-16. Cys-17 carries the N-palmitoyl cysteine lipid modification. Cys-17 is lipidated: S-diacylglycerol cysteine.

Belongs to the UPF0257 family.

The protein resides in the cell membrane. In Escherichia coli O45:K1 (strain S88 / ExPEC), this protein is UPF0257 lipoprotein YnfC.